Here is a 254-residue protein sequence, read N- to C-terminus: Small ribosomal subunit protein uS2 (254 aa).

The protein belongs to the universal ribosomal protein uS2 family.

This chain is Small ribosomal subunit protein uS2, found in Legionella pneumophila (strain Lens).